The primary structure comprises 73 residues: MRFALVAAITIALLVAGSVADESSEDIDNIVIKTPLDLPRCDSPFCSLFRIGLCGDKCTCVPLPIFGLCVPDV.

Positions M1–A20 are cleaved as a signal peptide. A propeptide spanning residues D21–D37 is cleaved from the precursor. Disulfide bonds link C41/C58, C46/C60, and C54/C69.

The protein belongs to the gympietide family. As to expression, expressed in trichomes, that are stiff epidermal hairs located on the surface of petioles and leaves. Not expressed in other aerial parts.

It localises to the secreted. In terms of biological role, neurotoxin certainly responsible for the defensive, persistent, and painful stings of the giant stinging tree. Inhibits inactivation of Nav1.7/SCN9A sodium channel in sensory neurons by directly interacting with TMEM233, a newly described Nav-interacting protein. Has virtually no effect on Nav1.7/SCN9A function in heterologous expression systems and in neurons that do not express TMEM233. Also weakly but significantly affects Nav1.8/SCN10A. Coexpression of TMEM233 with Nav also confers ExTxA sensitivity to Nav1.1-Nav1.6. On the Nav1.7/SCN9A channel, causes a significant hyperpolarizing shift in the voltage dependence of activation. Its effects on Nav currents are irreversible, with no apparent reduction in activity even after repeated wash steps over 30 minutes. Does not show activity on Nav1.9/SCN11A. Does not show insecticidal activities. In vivo, induces nocifensive behavior in mice (licking or biting and shaking or lifting of the affected paw) lasting for approximately 1 hour. The protein is Excelsatoxin A of Dendrocnide excelsa (Giant stinging tree).